A 209-amino-acid polypeptide reads, in one-letter code: Abscisic acid receptor PYL3 (209 aa).

Residues 1–23 (MNLAPIHDPSSSSTTTTSSSTPY) form a disordered region. The span at 10–21 (SSSSTTTTSSST) shows a compositional bias: low complexity. The START-like stretch occupies residues 43 to 205 (FPRSPNTCTS…NLQNLAVIST (163 aa)). Abscisate-binding positions include Lys-79, 113–118 (ASTSVE), 140–146 (RLNNYRS), and Glu-170. The short motif at 109 to 113 (SGLPA) is the Gate loop element. The Latch loop motif lies at 139–141 (HRL).

The protein belongs to the PYR/PYL/RCAR abscisic acid intracellular receptor family. As to quaternary structure, homodimer and monomer. Binds ABA on one subunit only. ABA-binding favors monomer and trans-homodimer intermediate, and increases PP2C inhibitor activity. Binds both (-)-ABA and (+)-ABA. Binds to CARs protein in an ABA-independent manner, both at the plasma membrane and in the nucleus. Interacts with HAB1, ABI1 and ABI2, and possibly with other PP2Cs.

It localises to the cytoplasm. The protein localises to the nucleus. Its subcellular location is the cell membrane. Receptor for abscisic acid (ABA) required for ABA-mediated responses such as stomatal closure and germination inhibition. Inhibits the activity of group-A protein phosphatases type 2C (PP2Cs) when activated by ABA. Can be activated by both (-)-ABA and (+)-ABA. The sequence is that of Abscisic acid receptor PYL3 (PYL3) from Arabidopsis thaliana (Mouse-ear cress).